The primary structure comprises 458 residues: Retinoic acid receptor alpha-B (458 aa).

The modulating stretch occupies residues 1 to 79 (MYESVDVVGL…PPSPPPPPRV (79 aa)). The segment at 48–75 (HWSGSNHSVETQSTSSEEIVPSPPSPPP) is disordered. Positions 49-64 (WSGSNHSVETQSTSSE) are enriched in polar residues. Positions 80–155 (YKPCFVCQDK…VGMSKESVRN (76 aa)) form a DNA-binding region, nuclear receptor. NR C4-type zinc fingers lie at residues 83 to 103 (CFVCQDKSSGYHYGVSACEGC) and 119 to 138 (CHREKSCIINKVTRNRCQYC). Positions 156 to 177 (DRNKRKKDDKKQECLENYVLSP) are hinge. Residues 178-412 (DTEKMIEQVR…PLIQEMLENS (235 aa)) enclose the NR LBD domain. Positions 403 to 411 (PLIQEMLEN) match the 9aaTAD motif. The tract at residues 411-458 (NSEGLEGGGSKGAGGGGGGGGGKGAPPGSCSPSLSPSSAHSSPSAHSP) is disordered. Positions 415–435 (LEGGGSKGAGGGGGGGGGKGA) are enriched in gly residues. The span at 436–458 (PPGSCSPSLSPSSAHSSPSAHSP) shows a compositional bias: low complexity.

The protein belongs to the nuclear hormone receptor family. NR1 subfamily. As to quaternary structure, heterodimer; with an rxr molecule. Binds DNA preferentially as a rar/rxr heterodimer. As to expression, in the embryo, zygotic expression largely overlaps that of raraa, with high levels in hindbrain, lateral plate mesoderm (LPM) and tail bud, but in later stages rarab is expressed more broadly in the brain, pectoral fin bud and pharyngeal arches.

Its subcellular location is the nucleus. In terms of biological role, receptor for retinoic acid. Retinoic acid receptors bind as heterodimers to their target response elements in response to their ligands, all-trans or 9-cis retinoic acid, and regulate gene expression in various biological processes. The rar/rxr heterodimers bind to the retinoic acid response elements (RARE) composed of tandem 5'-AGGTCA-3' sites known as DR1-DR5. Required for hindbrain development and, in lateral plate mesoderm, for specification of the pectoral fins. This is Retinoic acid receptor alpha-B from Danio rerio (Zebrafish).